Consider the following 97-residue polypeptide: Defensin alpha 4 (97 aa).

Positions 1–19 (MRIIAILAAILLVALQVRA) are cleaved as a signal peptide. Residues 20–63 (GPLQARGDEAPGQEQRGPEDQDISISFAWDKSSALQVSGSTRGM) constitute a propeptide that is removed on maturation. Cystine bridges form between cysteine 65–cysteine 93, cysteine 67–cysteine 82, and cysteine 72–cysteine 92. Aspartate 97 is a propeptide.

It belongs to the alpha-defensin family. As to quaternary structure, homodimer; homodimerization seems to be required for killing S.aureus, but not E.coli. Interacts with CD4. Interacts with Bacillus anthracis lef; homodimerization is required for the interaction. Post-translationally, the three-dimensional structure formed by the three intramolecular disulfide bridges is indispensable for effective bacterial killing.

The protein localises to the secreted. The protein resides in the cytoplasmic vesicle. It is found in the secretory vesicle. Its function is as follows. Host-defense peptide that has antimicrobial activity against Gram-negative bacteria, and to a lesser extent also against Gram-positive bacteria and fungi. Exhibits antimicrobial activity against Gram-negative E.coli and E.aerogenes and Gram-positive S.faecalis, S.aureus and B.cereus and the yeast C.albicans (in vitro). Inhibits corticotropin (ACTH)-stimulated corticosterone production (in vitro). Inhibits enzymatic activity of B.anthracis lef/anthrax lethal factor (in vitro). The polypeptide is Defensin alpha 4 (DEFA4) (Pan troglodytes (Chimpanzee)).